The following is a 1007-amino-acid chain: Probable beta-galactosidase A (1007 aa).

A signal peptide spans 1–18; sequence MRLLPVWTAALLAAQAAG. Substrate-binding residues include Y96, N140, A141, and E142. N156 is a glycosylation site (N-linked (GlcNAc...) asparagine). N199 is a substrate binding site. The active-site Proton donor is E200. C205 and C206 form a disulfide bridge. Residue Y260 participates in substrate binding. C266 and C315 are joined by a disulfide. E298 serves as the catalytic Nucleophile. Residue Y364 coordinates substrate. N-linked (GlcNAc...) asparagine glycosylation is found at N405, N422, N621, N740, N775, and N914.

The protein belongs to the glycosyl hydrolase 35 family.

Its subcellular location is the secreted. It catalyses the reaction Hydrolysis of terminal non-reducing beta-D-galactose residues in beta-D-galactosides.. Cleaves beta-linked terminal galactosyl residues from gangliosides, glycoproteins, and glycosaminoglycans. This chain is Probable beta-galactosidase A (lacA), found in Emericella nidulans (strain FGSC A4 / ATCC 38163 / CBS 112.46 / NRRL 194 / M139) (Aspergillus nidulans).